We begin with the raw amino-acid sequence, 466 residues long: MASKSDVNIIETSSKVHFSGFHQMDGLASNRPEQMAEEEEHGQPFVIGVAGGAASGKTTVCDMIMQQLHDQRAVVVNQDSFYHNVNEVELVRVHDYNFDHPDAFDTEQLLSSMEKLRKGQAVDIPNYDFKSYKNNVFPPRRVNPSDVIILEGILIFHDPRVRDLMNMKIFVDADADVRLARRIKRDTVEKGRDIATVLDQYSKFVKPAFEDFILPTKKYADIIIPRGGDNHVAIDLIVQHIHTKLGQHDLCKIYPNLYVIQSTFQIRGMHTLIRDSKTTKHDFIFYSDRLIRLVVEHGLGHLPFTEKQVVTPTGSVYSGVDFCKKLCGVSVIRSGESMENALRACCKGIKIGKILIHREGDNGQQLIYEKLPSDISERHVLLLDPILGTGNSAVQAIRLLISKGVPESNIIFLNLISAPEGVNVVCKKFPRIKIVTSEIELGLNDEFRVVPGMGEFGDRYFGTDDE.

The interval 41–246 is uridine kinase; sequence HGQPFVIGVA…IVQHIHTKLG (206 aa). The segment at 256-466 is uracil phosphoribosyltransferase; the sequence is NLYVIQSTFQ…GDRYFGTDDE (211 aa). GTP contacts are provided by residues K280, R289, and 323 to 326; that span reads CKKL. Residues R333 and R358 each coordinate 5-phospho-alpha-D-ribose 1-diphosphate. R378 is a GTP binding site. Residues D384, 389–392, and E455 contribute to the 5-phospho-alpha-D-ribose 1-diphosphate site; that span reads TGNS. 454–456 provides a ligand contact to uracil; that stretch reads GEF.

The protein in the N-terminal section; belongs to the uridine kinase family. In the C-terminal section; belongs to the UPRTase family. Requires Mg(2+) as cofactor.

The enzyme catalyses UMP + diphosphate = 5-phospho-alpha-D-ribose 1-diphosphate + uracil. It carries out the reaction cytidine + ATP = CMP + ADP + H(+). It catalyses the reaction uridine + ATP = UMP + ADP + H(+). Its pathway is pyrimidine metabolism; UMP biosynthesis via salvage pathway; UMP from uracil: step 1/1. The protein operates within pyrimidine metabolism; CTP biosynthesis via salvage pathway; CTP from cytidine: step 1/3. It functions in the pathway pyrimidine metabolism; UMP biosynthesis via salvage pathway; UMP from uridine: step 1/1. With respect to regulation, allosterically activated by GTP. In terms of biological role, involved in the pyrimidine salvage pathway. The uracil phosphoribosyltransferase (UPRT) activity, that catalyzes the conversion of uracil and 5-phospho-alpha-D-ribose 1-diphosphate (PRPP) to UMP and diphosphate, is unsure. This chain is Uridine kinase-like protein 3 (UKL3), found in Arabidopsis thaliana (Mouse-ear cress).